The following is a 150-amino-acid chain: MYGLILSRFNNCGYHCYETILIDVFDILSKYMDDIDMIDNENKTLLYYAVDVNNIQFAKRLLEYGASVTTSRSIINTAIQKSSYQRENKTRIVDLLLSYHPTLETMIDAFNRDIRYLYPEPLFACIRYALILDDDFPSKVSMISPVIIRN.

An ANK repeat occupies 41-73 (ENKTLLYYAVDVNNIQFAKRLLEYGASVTTSRS).

The protein is Ankyrin repeat protein C18/B24 of Vaccinia virus (strain Copenhagen) (VACV).